A 398-amino-acid polypeptide reads, in one-letter code: 4-hydroxy-3-methylbut-2-enyl diphosphate reductase (398 aa).

Cys-66 contributes to the [4Fe-4S] cluster binding site. Residue His-96 coordinates (2E)-4-hydroxy-3-methylbut-2-enyl diphosphate. His-96 serves as a coordination point for dimethylallyl diphosphate. His-96 serves as a coordination point for isopentenyl diphosphate. Cys-157 contributes to the [4Fe-4S] cluster binding site. (2E)-4-hydroxy-3-methylbut-2-enyl diphosphate is bound at residue His-185. His-185 is a binding site for dimethylallyl diphosphate. Residue His-185 coordinates isopentenyl diphosphate. Glu-187 (proton donor) is an active-site residue. (2E)-4-hydroxy-3-methylbut-2-enyl diphosphate is bound at residue Thr-250. Cys-288 is a [4Fe-4S] cluster binding site. Positions 317, 318, 319, and 380 each coordinate (2E)-4-hydroxy-3-methylbut-2-enyl diphosphate. Residues Ser-317, Ser-318, Asn-319, and Ser-380 each contribute to the dimethylallyl diphosphate site. Isopentenyl diphosphate contacts are provided by Ser-317, Ser-318, Asn-319, and Ser-380.

This sequence belongs to the IspH family. It depends on [4Fe-4S] cluster as a cofactor.

The enzyme catalyses isopentenyl diphosphate + 2 oxidized [2Fe-2S]-[ferredoxin] + H2O = (2E)-4-hydroxy-3-methylbut-2-enyl diphosphate + 2 reduced [2Fe-2S]-[ferredoxin] + 2 H(+). The catalysed reaction is dimethylallyl diphosphate + 2 oxidized [2Fe-2S]-[ferredoxin] + H2O = (2E)-4-hydroxy-3-methylbut-2-enyl diphosphate + 2 reduced [2Fe-2S]-[ferredoxin] + 2 H(+). The protein operates within isoprenoid biosynthesis; dimethylallyl diphosphate biosynthesis; dimethylallyl diphosphate from (2E)-4-hydroxy-3-methylbutenyl diphosphate: step 1/1. It participates in isoprenoid biosynthesis; isopentenyl diphosphate biosynthesis via DXP pathway; isopentenyl diphosphate from 1-deoxy-D-xylulose 5-phosphate: step 6/6. In terms of biological role, catalyzes the conversion of 1-hydroxy-2-methyl-2-(E)-butenyl 4-diphosphate (HMBPP) into a mixture of isopentenyl diphosphate (IPP) and dimethylallyl diphosphate (DMAPP). Acts in the terminal step of the DOXP/MEP pathway for isoprenoid precursor biosynthesis. This is 4-hydroxy-3-methylbut-2-enyl diphosphate reductase from Prochlorococcus marinus (strain AS9601).